Reading from the N-terminus, the 621-residue chain is Glutamyl-tRNA(Gln) amidotransferase subunit B, mitochondrial (621 aa).

The N-terminal 41 residues, 1-41, are a transit peptide targeting the mitochondrion; that stretch reads MARLPTTELRKYLLTGQFTRRGCLHLRPSPLAPPIPPLRTL. Disordered regions lie at residues 26–86 and 106–136; these read LRPS…DNQT and SKLF…APFD. 2 stretches are compositionally biased toward low complexity: residues 38–57 and 110–120; these read LRTL…QIIP and SPASTPSSSSD.

Belongs to the GatB/GatE family. GatB subfamily. In terms of assembly, subunit of the heterotrimeric GatCAB amidotransferase (AdT) complex, composed of A, B and C subunits.

The protein resides in the mitochondrion. It catalyses the reaction L-glutamyl-tRNA(Gln) + L-glutamine + ATP + H2O = L-glutaminyl-tRNA(Gln) + L-glutamate + ADP + phosphate + H(+). Allows the formation of correctly charged Gln-tRNA(Gln) through the transamidation of misacylated Glu-tRNA(Gln) in the mitochondria. The reaction takes place in the presence of glutamine and ATP through an activated gamma-phospho-Glu-tRNA(Gln). This is Glutamyl-tRNA(Gln) amidotransferase subunit B, mitochondrial from Podospora anserina (strain S / ATCC MYA-4624 / DSM 980 / FGSC 10383) (Pleurage anserina).